A 1129-amino-acid polypeptide reads, in one-letter code: SMC5-SMC6 complex localization factor protein 2 (1129 aa).

3 disordered regions span residues 71–178 (VKAR…SILN), 312–343 (NTSS…TEQA), and 955–1057 (MLYD…QLEG). Basic residues predominate over residues 72-87 (KARRHTLPHSSHRRSP). Polar residues predominate over residues 93–110 (LLFQQRPRNSSGQFTHNP). Composition is skewed to basic and acidic residues over residues 112–130 (QKKD…KKEL) and 149–166 (RKSE…RPRV). 2 stretches are compositionally biased toward polar residues: residues 169-178 (QATSSSSILN) and 324-343 (TGRS…TEQA). 2 stretches are compositionally biased toward acidic residues: residues 999–1014 (ESEE…EEDW) and 1033–1048 (SAED…EEES).

Belongs to the FAM178 family.

It localises to the nucleus. In terms of biological role, plays a role in the DNA damage response (DDR) pathway by regulating postreplication repair of UV-damaged DNA and genomic stability maintenance. Promotes the recruitment of the SMC5-SMC6 complex to DNA lesions. The protein is SMC5-SMC6 complex localization factor protein 2 (slf2) of Danio rerio (Zebrafish).